Consider the following 237-residue polypeptide: Aliphatic sulfonates import ATP-binding protein SsuB 1 (237 aa).

Residues Leu-5 to Ala-221 enclose the ABC transporter domain. Gly-38–Ser-45 contributes to the ATP binding site.

Belongs to the ABC transporter superfamily. Aliphatic sulfonates importer (TC 3.A.1.17.2) family. In terms of assembly, the complex is composed of two ATP-binding proteins (SsuB), two transmembrane proteins (SsuC) and a solute-binding protein (SsuA).

The protein localises to the cell inner membrane. It carries out the reaction ATP + H2O + aliphatic sulfonate-[sulfonate-binding protein]Side 1 = ADP + phosphate + aliphatic sulfonateSide 2 + [sulfonate-binding protein]Side 1.. Its function is as follows. Part of the ABC transporter complex SsuABC involved in aliphatic sulfonates import. Responsible for energy coupling to the transport system. The polypeptide is Aliphatic sulfonates import ATP-binding protein SsuB 1 (Pseudomonas syringae pv. syringae (strain B728a)).